Reading from the N-terminus, the 395-residue chain is ATP-dependent RNA helicase eIF4A (395 aa).

Residue serine 2 is modified to N-acetylserine. Residues 22-50 (YKFDDMELDENLLRGVFGYGFEEPSAIQQ) carry the Q motif motif. Residues 53–222 (IMPIIEGHDV…TKFMRNPVRI (170 aa)) form the Helicase ATP-binding domain. An ATP-binding site is contributed by 66 to 73 (AQSGTGKT). The residue at position 73 (threonine 73) is a Phosphothreonine. Serine 77 and serine 129 each carry phosphoserine. The residue at position 146 (threonine 146) is a Phosphothreonine. A DEAD box motif is present at residues 170–173 (DEAD). Residues 233–394 (GIKQFYVNVE…ELPSDIATLL (162 aa)) form the Helicase C-terminal domain.

The protein belongs to the DEAD box helicase family. eIF4A subfamily. In terms of assembly, component of the eIF4F complex, which composition varies with external and internal environmental conditions. It is composed of at least eIF4A, eIF4E and eIF4G.

It is found in the cytoplasm. It carries out the reaction ATP + H2O = ADP + phosphate + H(+). Functionally, ATP-dependent RNA helicase which is a subunit of the eIF4F complex involved in cap recognition and is required for mRNA binding to ribosome. In the current model of translation initiation, eIF4A unwinds RNA secondary structures in the 5'-UTR of mRNAs which is necessary to allow efficient binding of the small ribosomal subunit, and subsequent scanning for the initiator codon. The chain is ATP-dependent RNA helicase eIF4A (TIF1) from Saccharomyces cerevisiae (strain YJM789) (Baker's yeast).